A 526-amino-acid chain; its full sequence is GMP synthase [glutamine-hydrolyzing] (526 aa).

The Glutamine amidotransferase type-1 domain occupies 9-208 (RILILDFGSQ…LVNICGCKQL (200 aa)). Catalysis depends on Cys86, which acts as the Nucleophile. Catalysis depends on residues His182 and Glu184. Positions 209-401 (WTPGRIIEDA…LGLPYDMVYR (193 aa)) constitute a GMPS ATP-PPase domain. ATP is bound at residue 236–242 (SGGVDSS).

Homodimer.

It catalyses the reaction XMP + L-glutamine + ATP + H2O = GMP + L-glutamate + AMP + diphosphate + 2 H(+). It participates in purine metabolism; GMP biosynthesis; GMP from XMP (L-Gln route): step 1/1. Functionally, catalyzes the synthesis of GMP from XMP. In Hahella chejuensis (strain KCTC 2396), this protein is GMP synthase [glutamine-hydrolyzing].